A 675-amino-acid chain; its full sequence is Methionine--tRNA ligase (675 aa).

A 'HIGH' region motif is present at residues 15–25 (PYANGSIHLGH). Zn(2+) contacts are provided by Cys-146, Cys-149, Cys-159, and Cys-162. Positions 332–336 (KMSKS) match the 'KMSKS' region motif. ATP is bound at residue Lys-335. The region spanning 573 to 675 (DFAKVDMRIA…SGAQPGMQVK (103 aa)) is the tRNA-binding domain.

The protein belongs to the class-I aminoacyl-tRNA synthetase family. MetG type 1 subfamily. In terms of assembly, homodimer. The cofactor is Zn(2+).

Its subcellular location is the cytoplasm. It carries out the reaction tRNA(Met) + L-methionine + ATP = L-methionyl-tRNA(Met) + AMP + diphosphate. Functionally, is required not only for elongation of protein synthesis but also for the initiation of all mRNA translation through initiator tRNA(fMet) aminoacylation. The chain is Methionine--tRNA ligase from Yersinia pseudotuberculosis serotype I (strain IP32953).